We begin with the raw amino-acid sequence, 221 residues long: Octanoyltransferase (221 aa).

A BPL/LPL catalytic domain is found at Pro-40–Leu-218. Substrate-binding positions include Arg-82–His-89, Ala-149–Gly-151, and Gly-162–Ala-164. The active-site Acyl-thioester intermediate is the Cys-180.

The protein belongs to the LipB family.

Its subcellular location is the cytoplasm. The enzyme catalyses octanoyl-[ACP] + L-lysyl-[protein] = N(6)-octanoyl-L-lysyl-[protein] + holo-[ACP] + H(+). Its pathway is protein modification; protein lipoylation via endogenous pathway; protein N(6)-(lipoyl)lysine from octanoyl-[acyl-carrier-protein]: step 1/2. Catalyzes the transfer of endogenously produced octanoic acid from octanoyl-acyl-carrier-protein onto the lipoyl domains of lipoate-dependent enzymes. Lipoyl-ACP can also act as a substrate although octanoyl-ACP is likely to be the physiological substrate. The polypeptide is Octanoyltransferase (Nostoc sp. (strain PCC 7120 / SAG 25.82 / UTEX 2576)).